Consider the following 145-residue polypeptide: uncharacterized protein (145 aa).

Residues 63-83 (FLCLPLFLSFLVANLILWLSF) form a helical membrane-spanning segment.

It is found in the mitochondrion membrane. This is an uncharacterized protein from Arabidopsis thaliana (Mouse-ear cress).